Reading from the N-terminus, the 365-residue chain is 3-isopropylmalate dehydrogenase (365 aa).

The substrate site is built by arginine 96, arginine 106, arginine 134, and aspartate 224. Mg(2+) is bound by residues aspartate 224, aspartate 248, and aspartate 252. Residue 288–300 participates in NAD(+) binding; the sequence is GSAPTIAKQNIAN.

This sequence belongs to the isocitrate and isopropylmalate dehydrogenases family. LeuB type 1 subfamily. As to quaternary structure, homodimer. The cofactor is Mg(2+). Mn(2+) is required as a cofactor.

The protein resides in the cytoplasm. The catalysed reaction is (2R,3S)-3-isopropylmalate + NAD(+) = 4-methyl-2-oxopentanoate + CO2 + NADH. It participates in amino-acid biosynthesis; L-leucine biosynthesis; L-leucine from 3-methyl-2-oxobutanoate: step 3/4. Catalyzes the oxidation of 3-carboxy-2-hydroxy-4-methylpentanoate (3-isopropylmalate) to 3-carboxy-4-methyl-2-oxopentanoate. The product decarboxylates to 4-methyl-2 oxopentanoate. This Dehalococcoides mccartyi (strain ATCC BAA-2266 / KCTC 15142 / 195) (Dehalococcoides ethenogenes (strain 195)) protein is 3-isopropylmalate dehydrogenase.